A 203-amino-acid polypeptide reads, in one-letter code: Urease accessory protein UreG (203 aa).

14 to 21 (GPVGSGKT) is a GTP binding site.

This sequence belongs to the SIMIBI class G3E GTPase family. UreG subfamily. As to quaternary structure, homodimer. UreD, UreF and UreG form a complex that acts as a GTP-hydrolysis-dependent molecular chaperone, activating the urease apoprotein by helping to assemble the nickel containing metallocenter of UreC. The UreE protein probably delivers the nickel.

The protein resides in the cytoplasm. In terms of biological role, facilitates the functional incorporation of the urease nickel metallocenter. This process requires GTP hydrolysis, probably effectuated by UreG. The polypeptide is Urease accessory protein UreG (Rhizobium leguminosarum bv. trifolii (strain WSM2304)).